The following is a 316-amino-acid chain: Epoxide hydrolase 2 (316 aa).

One can recognise an AB hydrolase-1 domain in the interval 25–302 (PAVLFLHGFP…AAHFINQERP (278 aa)). D101 serves as the catalytic Nucleophile. An epoxide is bound at residue Y150. The active-site Proton donor is the Y230. H295 (proton acceptor) is an active-site residue.

This sequence belongs to the AB hydrolase superfamily. Epoxide hydrolase family. In terms of assembly, homodimer. In terms of tissue distribution, highly expressed in young fruits 15 days after anthesis (15-DAA). Also observed in stems and leaves.

It carries out the reaction an epoxide + H2O = an ethanediol. The catalysed reaction is (24S)-24,25-epoxycucurbitadienol + H2O = (24R)-24,25-dihydroxycucurbitadienol. It functions in the pathway secondary metabolite biosynthesis; terpenoid biosynthesis. In terms of biological role, epoxide hydrolase involved in the biosynthesis of cucurbitacin and mogroside tetracyclic triterpene natural products (e.g. siamenoside I and mogrosides IV, V and VI). Cucurbitacins have cytotoxic properties and exhibit deterrent taste as a defense barrier against herbivores. Mogrosides are nonsugar highly oxygenated compounds used as high-intensity zero-calorie sweeteners; they also possess pharmacological properties such as regulating immunity, lowering blood sugar and lipid levels, protecting the liver, and acting as antioxidants and antitumor agents. Catalyzes the hydrolysis of aromatic epoxide-containing substrates, such as the conversion of 24,25-epoxycucurbitadienol to 24,25-dihydroxycucurbitadienol. The sequence is that of Epoxide hydrolase 2 from Siraitia grosvenorii (Monk's fruit).